Consider the following 338-residue polypeptide: Taste receptor type 2 member 39 (338 aa).

Over 1 to 30 (MLGRCFPPNTKEKQQLRMIKLCDPAESELS) the chain is Extracellular. Residues 31-51 (PFLITLTLAVLLAEYLTGIIA) form a helical membrane-spanning segment. Residues 52-74 (NGFITAIHAAEWVQNKSVSTSGR) lie on the Cytoplasmic side of the membrane. A helical transmembrane segment spans residues 75–95 (ILVFLSVSRIALQSLMMLEIT). Residues 96–116 (ISSTSLSFYSEDAVYYAFKIS) lie on the Extracellular side of the membrane. A helical membrane pass occupies residues 117-137 (FIFLNFCSLWFAAWLSFFYFV). Residues 138 to 156 (KIANFSYPLFLKLRWRISG) are Cytoplasmic-facing. Residues 157–177 (LIPWLLWLSVFISFSHSMFCI) traverse the membrane as a helical segment. The Extracellular segment spans residues 178–205 (NICTGYCDNSFPIHSSNSTEKTYFSEIS). An N-linked (GlcNAc...) asparagine glycan is attached at Asn-194. Residues 206–226 (VVSLAFFFNLGIVIPLIMFIL) traverse the membrane as a helical segment. Over 227 to 262 (AAILLILSLKRHTLHMGSNATGSKDPSMEAHIGAIK) the chain is Cytoplasmic. The helical transmembrane segment at 263-283 (ATSYFLILYIFNAVALFIYLS) threads the bilayer. The Extracellular segment spans residues 284–291 (NMFDINSL). The helical transmembrane segment at 292-312 (WNTLCQIIMAAYPASHSILLI) threads the bilayer. At 313-338 (KDNPGLRRAWKQLQHRLHLYPKQWTL) the chain is on the cytoplasmic side.

This sequence belongs to the G-protein coupled receptor T2R family.

It is found in the membrane. In terms of biological role, receptor that may play a role in the perception of bitterness and is gustducin-linked. May play a role in sensing the chemical composition of the gastrointestinal content. The activity of this receptor may stimulate alpha gustducin, mediate PLC-beta-2 activation and lead to the gating of TRPM5. The protein is Taste receptor type 2 member 39 (TAS2R39) of Macaca mulatta (Rhesus macaque).